The primary structure comprises 267 residues: Tetrahydromethanopterin S-methyltransferase subunit C (267 aa).

7 helical membrane-spanning segments follow: residues 19 to 39 (IMAL…FAPP), 75 to 95 (IGML…SVGG), 97 to 117 (AGPI…GALA), 140 to 160 (TLVI…ASVV), 162 to 182 (YVVA…GILH), 198 to 218 (LMLA…ASSL), and 221 to 241 (GLMA…VAFS).

Belongs to the MtrC family. As to quaternary structure, the complex is composed of 8 subunits; MtrA, MtrB, MtrC, MtrD, MtrE, MtrF, MtrG and MtrH.

It is found in the cell membrane. The catalysed reaction is 5-methyl-5,6,7,8-tetrahydromethanopterin + coenzyme M + 2 Na(+)(in) = 5,6,7,8-tetrahydromethanopterin + methyl-coenzyme M + 2 Na(+)(out). It functions in the pathway one-carbon metabolism; methanogenesis from CO(2); methyl-coenzyme M from 5,10-methylene-5,6,7,8-tetrahydromethanopterin: step 2/2. Functionally, part of a complex that catalyzes the formation of methyl-coenzyme M and tetrahydromethanopterin from coenzyme M and methyl-tetrahydromethanopterin. This is an energy-conserving, sodium-ion translocating step. The chain is Tetrahydromethanopterin S-methyltransferase subunit C from Methanosarcina barkeri (strain Fusaro / DSM 804).